The sequence spans 203 residues: Twist-related protein 1 (203 aa).

The segment covering 1 to 18 (MMQDVSSSPVSPADDSLS) has biased composition (low complexity). Residues 1–106 (MMQDVSSSPV…GGGSPQSYEE (106 aa)) are disordered. Over residues 34–43 (RGGRKRRSSS) the composition is skewed to basic residues. Composition is skewed to gly residues over residues 47–66 (AGGG…GGDE) and 81–100 (GCGG…GGGS). The bHLH domain maps to 109-160 (TQRVMANVRERQRTQSLNEAFAALRKIIPTLPSDKLSKIQTLKLAARYIDFL). The sufficient for transactivation activity stretch occupies residues 162–192 (QVLQSDELDSKMASCSYVAHERLSYAFSVWR).

Efficient DNA binding requires dimerization with another bHLH protein. Homodimer or heterodimer with E proteins such as TCF3. ID1 binds preferentially to TCF3 but does not interact efficiently with TWIST1 so ID1 levels control the amount of TCF3 available to dimerize with TWIST and thus determine the type of dimer formed.

The protein resides in the nucleus. In terms of biological role, acts as a transcriptional regulator. Inhibits myogenesis by sequestrating E proteins, inhibiting trans-activation by MEF2, and inhibiting DNA-binding by MYOD1 through physical interaction. This interaction probably involves the basic domains of both proteins. Also represses expression of pro-inflammatory cytokines such as TNFA and IL1B. Regulates cranial suture patterning and fusion. Activates transcription as a heterodimer with E proteins. Regulates gene expression differentially, depending on dimer composition. Homodimers induce expression of FGFR2 and POSTN while heterodimers repress FGFR2 and POSTN expression and induce THBS1 expression. Heterodimerization is also required for osteoblast differentiation. Represses the activity of the circadian transcriptional activator: NPAS2-BMAL1 heterodimer. This is Twist-related protein 1 (TWIST1) from Pongo pygmaeus (Bornean orangutan).